A 758-amino-acid polypeptide reads, in one-letter code: 5-methyltetrahydropteroyltriglutamate--homocysteine methyltransferase (758 aa).

5-methyltetrahydropteroyltri-L-glutamate contacts are provided by residues 17 to 20 (RELK) and lysine 117. Residues 434–436 (IGS) and glutamate 487 contribute to the L-homocysteine site. Residues 434-436 (IGS) and glutamate 487 each bind L-methionine. 5-methyltetrahydropteroyltri-L-glutamate is bound by residues 518–519 (RC) and tryptophan 564. An L-homocysteine-binding site is contributed by aspartate 602. L-methionine is bound at residue aspartate 602. Glutamate 608 provides a ligand contact to 5-methyltetrahydropteroyltri-L-glutamate. The Zn(2+) site is built by histidine 644, cysteine 646, and glutamate 668. The active-site Proton donor is histidine 697. Residue cysteine 729 coordinates Zn(2+).

This sequence belongs to the vitamin-B12 independent methionine synthase family. Requires Zn(2+) as cofactor.

The catalysed reaction is 5-methyltetrahydropteroyltri-L-glutamate + L-homocysteine = tetrahydropteroyltri-L-glutamate + L-methionine. It functions in the pathway amino-acid biosynthesis; L-methionine biosynthesis via de novo pathway; L-methionine from L-homocysteine (MetE route): step 1/1. Its function is as follows. Catalyzes the transfer of a methyl group from 5-methyltetrahydrofolate to homocysteine resulting in methionine formation. The chain is 5-methyltetrahydropteroyltriglutamate--homocysteine methyltransferase from Yersinia pestis (strain Pestoides F).